A 549-amino-acid chain; its full sequence is Oxygen-dependent choline dehydrogenase (549 aa).

4 to 33 (DFVIIGSGSAGSAMASRLSEDGKHTVIVLE) is an FAD binding site. His465 serves as the catalytic Proton acceptor.

This sequence belongs to the GMC oxidoreductase family. FAD serves as cofactor.

The enzyme catalyses choline + A = betaine aldehyde + AH2. It catalyses the reaction betaine aldehyde + NAD(+) + H2O = glycine betaine + NADH + 2 H(+). Its pathway is amine and polyamine biosynthesis; betaine biosynthesis via choline pathway; betaine aldehyde from choline (cytochrome c reductase route): step 1/1. Functionally, involved in the biosynthesis of the osmoprotectant glycine betaine. Catalyzes the oxidation of choline to betaine aldehyde and betaine aldehyde to glycine betaine at the same rate. The chain is Oxygen-dependent choline dehydrogenase from Rhizobium rhizogenes (strain K84 / ATCC BAA-868) (Agrobacterium radiobacter).